Reading from the N-terminus, the 93-residue chain is DNA-directed RNA polymerase subunit omega (93 aa).

This sequence belongs to the RNA polymerase subunit omega family. The RNAP catalytic core consists of 2 alpha, 1 beta, 1 beta' and 1 omega subunit. When a sigma factor is associated with the core the holoenzyme is formed, which can initiate transcription.

It carries out the reaction RNA(n) + a ribonucleoside 5'-triphosphate = RNA(n+1) + diphosphate. Promotes RNA polymerase assembly. Latches the N- and C-terminal regions of the beta' subunit thereby facilitating its interaction with the beta and alpha subunits. The polypeptide is DNA-directed RNA polymerase subunit omega (Actinobacillus pleuropneumoniae serotype 3 (strain JL03)).